A 286-amino-acid polypeptide reads, in one-letter code: Bifunctional protein FolD (286 aa).

NADP(+)-binding positions include 165-167 (GRS), serine 190, and valine 231.

The protein belongs to the tetrahydrofolate dehydrogenase/cyclohydrolase family. Homodimer.

The catalysed reaction is (6R)-5,10-methylene-5,6,7,8-tetrahydrofolate + NADP(+) = (6R)-5,10-methenyltetrahydrofolate + NADPH. It catalyses the reaction (6R)-5,10-methenyltetrahydrofolate + H2O = (6R)-10-formyltetrahydrofolate + H(+). It functions in the pathway one-carbon metabolism; tetrahydrofolate interconversion. Catalyzes the oxidation of 5,10-methylenetetrahydrofolate to 5,10-methenyltetrahydrofolate and then the hydrolysis of 5,10-methenyltetrahydrofolate to 10-formyltetrahydrofolate. The sequence is that of Bifunctional protein FolD from Bacillus anthracis (strain A0248).